We begin with the raw amino-acid sequence, 335 residues long: Tetraacyldisaccharide 4'-kinase (335 aa).

Asn-62–Thr-69 lines the ATP pocket.

This sequence belongs to the LpxK family.

The enzyme catalyses a lipid A disaccharide + ATP = a lipid IVA + ADP + H(+). The protein operates within glycolipid biosynthesis; lipid IV(A) biosynthesis; lipid IV(A) from (3R)-3-hydroxytetradecanoyl-[acyl-carrier-protein] and UDP-N-acetyl-alpha-D-glucosamine: step 6/6. In terms of biological role, transfers the gamma-phosphate of ATP to the 4'-position of a tetraacyldisaccharide 1-phosphate intermediate (termed DS-1-P) to form tetraacyldisaccharide 1,4'-bis-phosphate (lipid IVA). This Methylobacillus flagellatus (strain ATCC 51484 / DSM 6875 / VKM B-1610 / KT) protein is Tetraacyldisaccharide 4'-kinase.